Consider the following 306-residue polypeptide: Agmatinase (306 aa).

The Mn(2+) site is built by histidine 126, aspartate 149, histidine 151, aspartate 153, aspartate 230, and aspartate 232.

The protein belongs to the arginase family. Agmatinase subfamily. Requires Mn(2+) as cofactor.

The catalysed reaction is agmatine + H2O = urea + putrescine. Its pathway is amine and polyamine biosynthesis; putrescine biosynthesis via agmatine pathway; putrescine from agmatine: step 1/1. Its function is as follows. Catalyzes the formation of putrescine from agmatine. This Escherichia coli O7:K1 (strain IAI39 / ExPEC) protein is Agmatinase.